We begin with the raw amino-acid sequence, 133 residues long: Maturin (133 aa).

This sequence belongs to the MTURN family.

Its subcellular location is the cytoplasm. In terms of biological role, may be involved in early neuronal development. May play a role in promoting megakaryocyte differentiation. In Danio rerio (Zebrafish), this protein is Maturin (mturn).